Consider the following 186-residue polypeptide: Ribosome-recycling factor (186 aa).

Belongs to the RRF family.

It localises to the cytoplasm. Responsible for the release of ribosomes from messenger RNA at the termination of protein biosynthesis. May increase the efficiency of translation by recycling ribosomes from one round of translation to another. The chain is Ribosome-recycling factor from Chlorobium limicola (strain DSM 245 / NBRC 103803 / 6330).